A 362-amino-acid chain; its full sequence is E3 ubiquitin-protein ligase TM129 (362 aa).

The Lumenal portion of the chain corresponds to 1 to 6; the sequence is MDSPEV. The helical transmembrane segment at 7-27 threads the bilayer; sequence TFTLAYLVFAVCFVFTPNEFH. Residues 28–56 lie on the Cytoplasmic side of the membrane; that stretch reads AAGLTVQNLLSGWLGSEDAAFVPFHLRRT. Residues 57-77 traverse the membrane as a helical segment; the sequence is AATLLCHSLLPLGYYVGMCLA. Residues 78–94 lie on the Lumenal side of the membrane; the sequence is ASEKRLHALSQAPEAWR. A helical membrane pass occupies residues 95–115; sequence LFLLLAVTLPSIACILIYYWS. Residues 116 to 362 are Cytoplasmic-facing; that stretch reads RDRWACHPLA…FCILDVCTVR (247 aa). The segment at 285–350 adopts an RING-type; degenerate zinc-finger fold; the sequence is CIGCMQTRAS…ASRVPCPTCR (66 aa).

This sequence belongs to the TMEM129 family. Integral component of ER-resident dislocation complexes.

Its subcellular location is the endoplasmic reticulum membrane. The catalysed reaction is S-ubiquitinyl-[E2 ubiquitin-conjugating enzyme]-L-cysteine + [acceptor protein]-L-lysine = [E2 ubiquitin-conjugating enzyme]-L-cysteine + N(6)-ubiquitinyl-[acceptor protein]-L-lysine.. It functions in the pathway protein modification; protein ubiquitination. E3 ubiquitin-protein ligase involved in ER-associated protein degradation, preferentially associates with the E2 enzyme UBE2J2. Exploited by viral US11 proteins to mediate HLA class I proteins degradation. This chain is E3 ubiquitin-protein ligase TM129 (TMEM129), found in Homo sapiens (Human).